The sequence spans 343 residues: tRNA N6-adenosine threonylcarbamoyltransferase (343 aa).

Fe cation is bound by residues histidine 116 and histidine 120. Substrate contacts are provided by residues 138 to 142, aspartate 172, glycine 185, aspartate 189, and asparagine 277; that span reads LVSGG. Aspartate 305 contributes to the Fe cation binding site.

This sequence belongs to the KAE1 / TsaD family. Fe(2+) serves as cofactor.

The protein localises to the cytoplasm. It catalyses the reaction L-threonylcarbamoyladenylate + adenosine(37) in tRNA = N(6)-L-threonylcarbamoyladenosine(37) in tRNA + AMP + H(+). In terms of biological role, required for the formation of a threonylcarbamoyl group on adenosine at position 37 (t(6)A37) in tRNAs that read codons beginning with adenine. Is involved in the transfer of the threonylcarbamoyl moiety of threonylcarbamoyl-AMP (TC-AMP) to the N6 group of A37, together with TsaE and TsaB. TsaD likely plays a direct catalytic role in this reaction. This chain is tRNA N6-adenosine threonylcarbamoyltransferase, found in Mycobacterium ulcerans (strain Agy99).